Reading from the N-terminus, the 375-residue chain is Queuine tRNA-ribosyltransferase (375 aa).

The Proton acceptor role is filled by D94. Substrate contacts are provided by residues 94 to 98, D148, Q191, and G218; that span reads DSGGF. Positions 249 to 255 are RNA binding; sequence GVGSPDD. The active-site Nucleophile is D268. Residues 273 to 277 form an RNA binding; important for wobble base 34 recognition region; sequence TRIAR. 4 residues coordinate Zn(2+): C306, C308, C311, and H337.

This sequence belongs to the queuine tRNA-ribosyltransferase family. As to quaternary structure, homodimer. Within each dimer, one monomer is responsible for RNA recognition and catalysis, while the other monomer binds to the replacement base PreQ1. It depends on Zn(2+) as a cofactor.

The catalysed reaction is 7-aminomethyl-7-carbaguanine + guanosine(34) in tRNA = 7-aminomethyl-7-carbaguanosine(34) in tRNA + guanine. It participates in tRNA modification; tRNA-queuosine biosynthesis. In terms of biological role, catalyzes the base-exchange of a guanine (G) residue with the queuine precursor 7-aminomethyl-7-deazaguanine (PreQ1) at position 34 (anticodon wobble position) in tRNAs with GU(N) anticodons (tRNA-Asp, -Asn, -His and -Tyr). Catalysis occurs through a double-displacement mechanism. The nucleophile active site attacks the C1' of nucleotide 34 to detach the guanine base from the RNA, forming a covalent enzyme-RNA intermediate. The proton acceptor active site deprotonates the incoming PreQ1, allowing a nucleophilic attack on the C1' of the ribose to form the product. After dissociation, two additional enzymatic reactions on the tRNA convert PreQ1 to queuine (Q), resulting in the hypermodified nucleoside queuosine (7-(((4,5-cis-dihydroxy-2-cyclopenten-1-yl)amino)methyl)-7-deazaguanosine). In Thermoanaerobacter sp. (strain X514), this protein is Queuine tRNA-ribosyltransferase.